A 499-amino-acid polypeptide reads, in one-letter code: Lipopolysaccharide core galacturonosyltransferase RgtA (499 aa).

Transmembrane regions (helical) follow at residues 11 to 31 (TAGL…IVLP), 74 to 94 (IGAL…FYGL), 103 to 123 (EALA…SYMA), 125 to 145 (QDLT…YGFF), 165 to 185 (IGLI…IAIL), 199 to 219 (MLAA…WLQG), 248 to 268 (LLAF…IFAA), 291 to 311 (MMLA…STTV), 316 to 336 (LDPF…AAGL), and 351 to 371 (VLMA…GLIG).

This sequence belongs to the glycosyltransferase 83 family.

The protein localises to the cell inner membrane. It participates in bacterial outer membrane biogenesis; LPS core biosynthesis. Involved in the modification of the lipopolysaccharide (LPS) inner core. Catalyzes the transfer of a galacturonic acid (GalA) residue to the 4-position of the outer Kdo (3-deoxy-D-manno-octulosonic acid) residue of the LPS inner core, using dodecaprenyl phosphate-GalA as the donor substrate. GalA addition by RgtA is required for RgtB activity. In Rhizobium johnstonii (strain DSM 114642 / LMG 32736 / 3841) (Rhizobium leguminosarum bv. viciae), this protein is Lipopolysaccharide core galacturonosyltransferase RgtA.